Here is a 99-residue protein sequence, read N- to C-terminus: A-type ATP synthase subunit F (99 aa).

It belongs to the V-ATPase F subunit family. In terms of assembly, has multiple subunits with at least A(3), B(3), C, D, E, F, H, I and proteolipid K(x).

Its subcellular location is the cell membrane. Functionally, component of the A-type ATP synthase that produces ATP from ADP in the presence of a proton gradient across the membrane. The sequence is that of A-type ATP synthase subunit F from Methanococcus maripaludis (strain DSM 14266 / JCM 13030 / NBRC 101832 / S2 / LL).